Consider the following 178-residue polypeptide: MIITIGGLPGTGTTTIAKMIAEKYNLRHVCAGFIFREMAKEMGMDLQEFSKYAEQHKEIDEEIDRRQVEIAKQGNVVLEGRLAAWMLLKNGIKPDLTIWFKAPLEVRAERISKRENIDKDVALKKMIEREASEKKRYKEIYNIDLDDLSIYDLVIDTSKWDVEGVFNIVSSAIDNLKK.

Residue 7–15 (GLPGTGTTT) coordinates ATP.

It belongs to the cytidylate kinase family. Type 2 subfamily.

Its subcellular location is the cytoplasm. It carries out the reaction CMP + ATP = CDP + ADP. The enzyme catalyses dCMP + ATP = dCDP + ADP. The polypeptide is Cytidylate kinase (cmk) (Methanocaldococcus jannaschii (strain ATCC 43067 / DSM 2661 / JAL-1 / JCM 10045 / NBRC 100440) (Methanococcus jannaschii)).